Reading from the N-terminus, the 576-residue chain is Enolase 4 (576 aa).

The interval 187–232 (ELRNEAMSEAPPQATPTSAPAKDKKGNDKGKKGNITENPLPPAEPP) is disordered. A compositionally biased stretch (low complexity) spans 196 to 206 (APPQATPTSAP). Basic and acidic residues predominate over residues 207 to 217 (AKDKKGNDKGK). Substrate is bound by residues E302 and K524.

It belongs to the enolase family.

The enzyme catalyses (2R)-2-phosphoglycerate = phosphoenolpyruvate + H2O. It participates in carbohydrate degradation; glycolysis; pyruvate from D-glyceraldehyde 3-phosphate: step 4/5. The polypeptide is Enolase 4 (eno4) (Danio rerio (Zebrafish)).